The primary structure comprises 179 residues: GTP-dependent dephospho-CoA kinase (179 aa).

Positions 55, 57, 74, 76, and 128 each coordinate GTP.

This sequence belongs to the GTP-dependent DPCK family.

It catalyses the reaction 3'-dephospho-CoA + GTP = GDP + CoA + H(+). It functions in the pathway cofactor biosynthesis; coenzyme A biosynthesis. Catalyzes the GTP-dependent phosphorylation of the 3'-hydroxyl group of dephosphocoenzyme A to form coenzyme A (CoA). The polypeptide is GTP-dependent dephospho-CoA kinase (Saccharolobus islandicus (strain M.16.27) (Sulfolobus islandicus)).